The chain runs to 190 residues: Peptidyl-tRNA hydrolase (190 aa).

Y14 provides a ligand contact to tRNA. H19 (proton acceptor) is an active-site residue. TRNA is bound by residues Y64, N66, and N112.

The protein belongs to the PTH family. In terms of assembly, monomer.

It localises to the cytoplasm. The enzyme catalyses an N-acyl-L-alpha-aminoacyl-tRNA + H2O = an N-acyl-L-amino acid + a tRNA + H(+). In terms of biological role, hydrolyzes ribosome-free peptidyl-tRNAs (with 1 or more amino acids incorporated), which drop off the ribosome during protein synthesis, or as a result of ribosome stalling. Its function is as follows. Catalyzes the release of premature peptidyl moieties from peptidyl-tRNA molecules trapped in stalled 50S ribosomal subunits, and thus maintains levels of free tRNAs and 50S ribosomes. This chain is Peptidyl-tRNA hydrolase, found in Chlorobium phaeovibrioides (strain DSM 265 / 1930) (Prosthecochloris vibrioformis (strain DSM 265)).